The primary structure comprises 407 residues: Argininosuccinate synthase (407 aa).

Residues Ala-16 to Ser-24 and Ala-44 each bind ATP. Tyr-96 and Ser-101 together coordinate L-citrulline. Gly-126 is a binding site for ATP. Thr-128, Asn-132, and Asp-133 together coordinate L-aspartate. Asn-132 serves as a coordination point for L-citrulline. L-citrulline-binding residues include Arg-136, Ser-185, Ser-194, Glu-270, and Tyr-282.

This sequence belongs to the argininosuccinate synthase family. Type 1 subfamily. Homotetramer.

The protein localises to the cytoplasm. It carries out the reaction L-citrulline + L-aspartate + ATP = 2-(N(omega)-L-arginino)succinate + AMP + diphosphate + H(+). Its pathway is amino-acid biosynthesis; L-arginine biosynthesis; L-arginine from L-ornithine and carbamoyl phosphate: step 2/3. The chain is Argininosuccinate synthase from Shewanella sp. (strain ANA-3).